The following is a 652-amino-acid chain: UvrABC system protein C (652 aa).

Residues Lys37–Ile116 form the GIY-YIG domain. Positions Asp226–Leu261 constitute a UVR domain.

Belongs to the UvrC family. In terms of assembly, interacts with UvrB in an incision complex.

It is found in the cytoplasm. Its function is as follows. The UvrABC repair system catalyzes the recognition and processing of DNA lesions. UvrC both incises the 5' and 3' sides of the lesion. The N-terminal half is responsible for the 3' incision and the C-terminal half is responsible for the 5' incision. The protein is UvrABC system protein C of Prochlorococcus marinus (strain MIT 9312).